The sequence spans 286 residues: NAD kinase (286 aa).

D68 functions as the Proton acceptor in the catalytic mechanism. Residues 68–69 (DG), K73, 142–143 (ND), R153, D172, 183–188 (TGYSFS), and Q242 contribute to the NAD(+) site.

Belongs to the NAD kinase family. A divalent metal cation is required as a cofactor.

The protein localises to the cytoplasm. The enzyme catalyses NAD(+) + ATP = ADP + NADP(+) + H(+). In terms of biological role, involved in the regulation of the intracellular balance of NAD and NADP, and is a key enzyme in the biosynthesis of NADP. Catalyzes specifically the phosphorylation on 2'-hydroxyl of the adenosine moiety of NAD to yield NADP. This chain is NAD kinase, found in Natranaerobius thermophilus (strain ATCC BAA-1301 / DSM 18059 / JW/NM-WN-LF).